Here is a 30-residue protein sequence, read N- to C-terminus: uncharacterized protein (30 aa).

This is an uncharacterized protein from Saccharomyces cerevisiae (strain ATCC 204508 / S288c) (Baker's yeast).